We begin with the raw amino-acid sequence, 282 residues long: Protein FRG2-like-2 (282 aa).

The segment covering 1–10 has biased composition (basic and acidic residues); it reads MGKGNEDPDL. Disordered stretches follow at residues 1 to 96 and 249 to 282; these read MGKG…QENC and GPGD…LGAP. Composition is skewed to polar residues over residues 13-31, 58-68, and 79-94; these read SSIQ…SFTE, RQAGSDPNPNK, and GNST…SYQE.

Belongs to the FRG2 family.

It is found in the nucleus. The sequence is that of Protein FRG2-like-2 (FRG2C) from Homo sapiens (Human).